The sequence spans 328 residues: Fructokinase-2 (328 aa).

It belongs to the carbohydrate kinase PfkB family.

The enzyme catalyses D-fructose + ATP = D-fructose 6-phosphate + ADP + H(+). The protein operates within glycan biosynthesis; starch biosynthesis. Functionally, may play an important role in maintaining the flux of carbon towards starch formation. This chain is Fructokinase-2 (FRK2), found in Solanum lycopersicum (Tomato).